The following is a 653-amino-acid chain: ATP-dependent zinc metalloprotease FtsH 1 (653 aa).

The Cytoplasmic portion of the chain corresponds to 1–7; it reads MSRFFKS. A helical membrane pass occupies residues 8–28; it reads AAFPILIVVVLAFFAQRLINP. The Extracellular segment spans residues 29 to 105; sequence GDSGPRYDYS…FDIEGTKSNG (77 aa). The helical transmembrane segment at 106–126 threads the bilayer; sequence WLSLLTYVLPFLIFIGFWIFL. Over 127–653 the chain is Cytoplasmic; the sequence is MNQVQGGGSK…MHFPERPELA (527 aa). 198–205 is a binding site for ATP; sequence GPPGTGKT. His420 serves as a coordination point for Zn(2+). The active site involves Glu421. 2 residues coordinate Zn(2+): His424 and Asp496. A disordered region spans residues 603–653; sequence EEVFGAEASPPPDVPLPPATERGRDTPRPLPRPGLAGGAAEMHFPERPELA. Positions 611–620 are enriched in pro residues; that stretch reads SPPPDVPLPP.

In the central section; belongs to the AAA ATPase family. The protein in the C-terminal section; belongs to the peptidase M41 family. Homohexamer. Zn(2+) is required as a cofactor.

Its subcellular location is the cell membrane. Functionally, acts as a processive, ATP-dependent zinc metallopeptidase for both cytoplasmic and membrane proteins. Plays a role in the quality control of integral membrane proteins. In Conexibacter woesei (strain DSM 14684 / CCUG 47730 / CIP 108061 / JCM 11494 / NBRC 100937 / ID131577), this protein is ATP-dependent zinc metalloprotease FtsH 1.